We begin with the raw amino-acid sequence, 329 residues long: Flotillin-like protein FloA (329 aa).

Helical transmembrane passes span 4-24 (FIPFIILIGVAFVILSIILSF) and 27-47 (VGLWITAQFSGVKVGIFTLVG).

It belongs to the flotillin-like FloA family. As to quaternary structure, homooligomerizes.

It is found in the cell membrane. The protein resides in the membrane raft. In terms of biological role, found in functional membrane microdomains (FMM) that may be equivalent to eukaryotic membrane rafts. FMMs are highly dynamic and increase in number as cells age. Flotillins are thought to be important factors in membrane fluidity. The chain is Flotillin-like protein FloA from Alkaliphilus metalliredigens (strain QYMF).